A 432-amino-acid polypeptide reads, in one-letter code: MKVLVLGGGVIGVTSAYYLARAGAEVTVLDRQDAPASETSFANAGQVSPGYSTPWAAPGIPLKALKWMLQEHAPLAVRLDGSLFQLRWMAQMLRNCSAQRYAVNKERMMRVAEYSRSCLQQLRADTGIAYEQRTGGTLQLFRTQAQLDAVERDVAVLRECAVPFELLDRDQLAQVEPALAQARDRLTGGLRLPKDETGDCHRFTNELARIATGLGVELRFNQNVDGLVVEGGRIAGVRVNGELLTADRYVMAFGSYSRQALEPLGLDLPVYPVKGYSLTVPLGNPALAPQSTVLDETYKIAVTRFDDRIRVGGMAELGGFDLRLDPRRRATLELVVNDLFPGGDVARASFWTGLRPMTPDGTPIIGATRYANLFLNTGHGTLGWTMACGSGRLIADLITGRSPEISTDGLALDRYTHRPARHLGGSSTPVSA.

3–17 contributes to the FAD binding site; that stretch reads VLVLGGGVIGVTSAY.

Belongs to the DadA oxidoreductase family. It depends on FAD as a cofactor.

The enzyme catalyses a D-alpha-amino acid + A + H2O = a 2-oxocarboxylate + AH2 + NH4(+). The protein operates within amino-acid degradation; D-alanine degradation; NH(3) and pyruvate from D-alanine: step 1/1. Oxidative deamination of D-amino acids. The protein is D-amino acid dehydrogenase of Delftia acidovorans (strain DSM 14801 / SPH-1).